A 553-amino-acid chain; its full sequence is Hydroxylamine reductase (553 aa).

[2Fe-2S] cluster is bound by residues Cys-3, Cys-6, Cys-18, and Cys-25. Hybrid [4Fe-2O-2S] cluster-binding residues include His-252, Glu-276, Cys-320, Cys-408, Cys-436, Cys-461, Glu-495, and Lys-497. The residue at position 408 (Cys-408) is a Cysteine persulfide.

The protein belongs to the HCP family. [2Fe-2S] cluster is required as a cofactor. Hybrid [4Fe-2O-2S] cluster serves as cofactor.

The protein resides in the cytoplasm. The catalysed reaction is A + NH4(+) + H2O = hydroxylamine + AH2 + H(+). Catalyzes the reduction of hydroxylamine to form NH(3) and H(2)O. In Vibrio parahaemolyticus serotype O3:K6 (strain RIMD 2210633), this protein is Hydroxylamine reductase.